The following is a 269-amino-acid chain: Glutamate racemase (269 aa).

Substrate contacts are provided by residues 14–15 and 46–47; these read DS and YS. The active-site Proton donor/acceptor is Cys-78. Residue 79–80 participates in substrate binding; it reads NT. Residue Cys-189 is the Proton donor/acceptor of the active site. 190 to 191 provides a ligand contact to substrate; the sequence is TH.

This sequence belongs to the aspartate/glutamate racemases family.

It carries out the reaction L-glutamate = D-glutamate. Its pathway is cell wall biogenesis; peptidoglycan biosynthesis. In terms of biological role, provides the (R)-glutamate required for cell wall biosynthesis. The protein is Glutamate racemase of Haemophilus influenzae (strain 86-028NP).